The following is a 420-amino-acid chain: Histidine--tRNA ligase (420 aa).

Belongs to the class-II aminoacyl-tRNA synthetase family. Homodimer.

Its subcellular location is the cytoplasm. It carries out the reaction tRNA(His) + L-histidine + ATP = L-histidyl-tRNA(His) + AMP + diphosphate + H(+). This is Histidine--tRNA ligase from Staphylococcus saprophyticus subsp. saprophyticus (strain ATCC 15305 / DSM 20229 / NCIMB 8711 / NCTC 7292 / S-41).